We begin with the raw amino-acid sequence, 405 residues long: Probable dual specificity protein kinase YAK1 homolog (405 aa).

A Protein kinase domain is found at 40 to 335 (YMIIDMLGTG…AKSLASHSYL (296 aa)). ATP is bound by residues 46–54 (LGTGTFGQV) and Lys-68. Asp-163 serves as the catalytic Proton acceptor.

Belongs to the protein kinase superfamily. CMGC Ser/Thr protein kinase family. MNB/DYRK subfamily.

The protein localises to the cytoplasm. The protein resides in the nucleus. The enzyme catalyses L-seryl-[protein] + ATP = O-phospho-L-seryl-[protein] + ADP + H(+). It carries out the reaction L-threonyl-[protein] + ATP = O-phospho-L-threonyl-[protein] + ADP + H(+). It catalyses the reaction L-tyrosyl-[protein] + ATP = O-phospho-L-tyrosyl-[protein] + ADP + H(+). Its function is as follows. Negative regulator of the cell cycle acting downstream of the cAMP-dependent protein kinase. Part of a glucose-sensing system involved in growth control in response to glucose availability. The protein is Probable dual specificity protein kinase YAK1 homolog (YAK1) of Encephalitozoon cuniculi (strain GB-M1) (Microsporidian parasite).